The chain runs to 146 residues: Globin (146 aa).

N-acetylalanine is present on A1. The 146-residue stretch at 1-146 (ALTEPQKTAL…LLTMLIKAHS (146 aa)) folds into the Globin domain. H65 and H97 together coordinate heme b.

The protein belongs to the globin family. As to quaternary structure, homodimer.

This Buccinum undatum (Common whelk) protein is Globin.